The chain runs to 308 residues: Probable manganese-dependent inorganic pyrophosphatase (308 aa).

The Mn(2+) site is built by H9, D13, D15, D75, H97, and D149.

This sequence belongs to the PPase class C family. It depends on Mn(2+) as a cofactor.

Its subcellular location is the cytoplasm. The catalysed reaction is diphosphate + H2O = 2 phosphate + H(+). The protein is Probable manganese-dependent inorganic pyrophosphatase of Enterococcus faecalis (strain ATCC 700802 / V583).